The primary structure comprises 122 residues: NADH-quinone oxidoreductase subunit A (122 aa).

3 helical membrane passes run 12 to 32 (IIIF…VNLI), 66 to 86 (LVAI…PWAI), and 91 to 111 (IGGL…VGFI).

The protein belongs to the complex I subunit 3 family. In terms of assembly, NDH-1 is composed of 14 different subunits. Subunits NuoA, H, J, K, L, M, N constitute the membrane sector of the complex.

The protein resides in the cell inner membrane. It catalyses the reaction a quinone + NADH + 5 H(+)(in) = a quinol + NAD(+) + 4 H(+)(out). Functionally, NDH-1 shuttles electrons from NADH, via FMN and iron-sulfur (Fe-S) centers, to quinones in the respiratory chain. The immediate electron acceptor for the enzyme in this species is believed to be ubiquinone. Couples the redox reaction to proton translocation (for every two electrons transferred, four hydrogen ions are translocated across the cytoplasmic membrane), and thus conserves the redox energy in a proton gradient. This Pelagibacter ubique (strain HTCC1062) protein is NADH-quinone oxidoreductase subunit A.